A 120-amino-acid chain; its full sequence is MAVPKSKQPRKQRRWLYKTAKLHERHKLLHATLSKDLRKKYGKRAIRVRKGDKVRIMRGQFAGHEGRVLEVDMKRCRITVDGVTVTKADGTEVAVPIHPSNVMITDFGEVDEVRKKILER.

It belongs to the universal ribosomal protein uL24 family. Part of the 50S ribosomal subunit.

One of two assembly initiator proteins, it binds directly to the 5'-end of the 23S rRNA, where it nucleates assembly of the 50S subunit. Functionally, located at the polypeptide exit tunnel on the outside of the subunit. This chain is Large ribosomal subunit protein uL24, found in Archaeoglobus fulgidus (strain ATCC 49558 / DSM 4304 / JCM 9628 / NBRC 100126 / VC-16).